Reading from the N-terminus, the 269-residue chain is Diaminopimelate epimerase (269 aa).

Substrate is bound by residues N15 and N66. C75 functions as the Proton donor in the catalytic mechanism. Substrate-binding positions include 76 to 77 (GN), N152, N185, and 203 to 204 (ER). The Proton acceptor role is filled by C212. Position 213-214 (213-214 (GT)) interacts with substrate.

This sequence belongs to the diaminopimelate epimerase family. Homodimer.

Its subcellular location is the cytoplasm. The enzyme catalyses (2S,6S)-2,6-diaminopimelate = meso-2,6-diaminopimelate. Its pathway is amino-acid biosynthesis; L-lysine biosynthesis via DAP pathway; DL-2,6-diaminopimelate from LL-2,6-diaminopimelate: step 1/1. In terms of biological role, catalyzes the stereoinversion of LL-2,6-diaminopimelate (L,L-DAP) to meso-diaminopimelate (meso-DAP), a precursor of L-lysine and an essential component of the bacterial peptidoglycan. In Parabacteroides distasonis (strain ATCC 8503 / DSM 20701 / CIP 104284 / JCM 5825 / NCTC 11152), this protein is Diaminopimelate epimerase.